An 83-amino-acid chain; its full sequence is Large ribosomal subunit protein bL27c (83 aa).

The segment at Met-1 to Leu-21 is disordered.

Belongs to the bacterial ribosomal protein bL27 family.

The protein resides in the plastid. It is found in the chloroplast. The chain is Large ribosomal subunit protein bL27c from Phaeodactylum tricornutum (strain CCAP 1055/1).